The following is a 160-amino-acid chain: MRHNKKFNHLGRKAAHRKAMLSNMAASLILHKRIFTTVAKAKALRIYVEPLLTKTKEDTTHSRRIAFSYLQNKYALKELFGDVAAKIADRPGGYTRILKTGYRLGDNAAMCFIELVDYNENMLGEAAKKATKTRRSRKRKSADVVVEAAPAEETPKAAEE.

The segment at 128–160 (KKATKTRRSRKRKSADVVVEAAPAEETPKAAEE) is disordered. Residues 129–140 (KATKTRRSRKRK) are compositionally biased toward basic residues.

Belongs to the bacterial ribosomal protein bL17 family. As to quaternary structure, part of the 50S ribosomal subunit. Contacts protein L32.

This chain is Large ribosomal subunit protein bL17, found in Porphyromonas gingivalis (strain ATCC 33277 / DSM 20709 / CIP 103683 / JCM 12257 / NCTC 11834 / 2561).